We begin with the raw amino-acid sequence, 130 residues long: uncharacterized protein (130 aa).

The protein belongs to the thioester dehydratase family. FabZ subfamily.

This is an uncharacterized protein from Bacillus subtilis (strain 168).